Reading from the N-terminus, the 480-residue chain is Glutamyl-tRNA(Gln) amidotransferase subunit A (480 aa).

Active-site charge relay system residues include Lys-74 and Ser-149. Catalysis depends on Ser-173, which acts as the Acyl-ester intermediate.

Belongs to the amidase family. GatA subfamily. In terms of assembly, heterotrimer of A, B and C subunits.

The enzyme catalyses L-glutamyl-tRNA(Gln) + L-glutamine + ATP + H2O = L-glutaminyl-tRNA(Gln) + L-glutamate + ADP + phosphate + H(+). Functionally, allows the formation of correctly charged Gln-tRNA(Gln) through the transamidation of misacylated Glu-tRNA(Gln) in organisms which lack glutaminyl-tRNA synthetase. The reaction takes place in the presence of glutamine and ATP through an activated gamma-phospho-Glu-tRNA(Gln). This Vesicomyosocius okutanii subsp. Calyptogena okutanii (strain HA) protein is Glutamyl-tRNA(Gln) amidotransferase subunit A.